Consider the following 421-residue polypeptide: Type II methyltransferase M.TaqI (421 aa).

The segment covering 1 to 18 (MGLPPLLSLPSNSAPRSL) has biased composition (low complexity). A disordered region spans residues 1–20 (MGLPPLLSLPSNSAPRSLGR). Residues T23, 45–48 (EPAC), E71, D89, and P107 contribute to the S-adenosyl-L-methionine site.

It belongs to the N(4)/N(6)-methyltransferase family.

It carries out the reaction a 2'-deoxyadenosine in DNA + S-adenosyl-L-methionine = an N(6)-methyl-2'-deoxyadenosine in DNA + S-adenosyl-L-homocysteine + H(+). In terms of biological role, a gamma subtype methylase that recognizes the double-stranded sequence 5'-TCGA-3', methylates A-4 on both strands and protects the DNA from cleavage by the TaqI endonuclease. The protein is Type II methyltransferase M.TaqI (taqIM) of Thermus aquaticus.